The following is a 704-amino-acid chain: Glycine--tRNA ligase beta subunit (704 aa).

It belongs to the class-II aminoacyl-tRNA synthetase family. As to quaternary structure, tetramer of two alpha and two beta subunits.

It is found in the cytoplasm. The catalysed reaction is tRNA(Gly) + glycine + ATP = glycyl-tRNA(Gly) + AMP + diphosphate. The protein is Glycine--tRNA ligase beta subunit of Rhizobium etli (strain CIAT 652).